The following is a 178-amino-acid chain: Cytochrome b6-f complex iron-sulfur subunit (178 aa).

The chain crosses the membrane as a helical span at residues 20–42 (LLTFGTATGVALGALYPVANYFM). Residues 65 to 161 (KTGWLATHQA…VDIEDDAVLV (97 aa)) form the Rieske domain. [2Fe-2S] cluster contacts are provided by Cys107, His109, Cys125, and His128. Cys112 and Cys127 form a disulfide bridge.

Belongs to the Rieske iron-sulfur protein family. As to quaternary structure, the 4 large subunits of the cytochrome b6-f complex are cytochrome b6, subunit IV (17 kDa polypeptide, PetD), cytochrome f and the Rieske protein, while the 4 small subunits are PetG, PetL, PetM and PetN. The complex functions as a dimer. Requires [2Fe-2S] cluster as cofactor.

The protein localises to the cellular thylakoid membrane. It catalyses the reaction 2 oxidized [plastocyanin] + a plastoquinol + 2 H(+)(in) = 2 reduced [plastocyanin] + a plastoquinone + 4 H(+)(out). Component of the cytochrome b6-f complex, which mediates electron transfer between photosystem II (PSII) and photosystem I (PSI), cyclic electron flow around PSI, and state transitions. The chain is Cytochrome b6-f complex iron-sulfur subunit from Prochlorococcus marinus (strain MIT 9215).